Consider the following 280-residue polypeptide: Ribonuclease P protein subunit p38 (280 aa).

Alanine 2 is modified (N-acetylalanine). Serine 12, serine 221, and serine 230 each carry phosphoserine. The tract at residues 202–227 (WLPDRTQGPTDSLETEPSESQDNEIL) is disordered. Residues 214–226 (LETEPSESQDNEI) show a composition bias toward acidic residues. Residues 254–280 (QPLKIKKLIPNPSKIRKPPKSKKSISK) form a disordered region. Residues 267-280 (KIRKPPKSKKSISK) show a composition bias toward basic residues.

This sequence belongs to the eukaryotic ribosomal protein eL8 family. Component of nuclear RNase P and RNase MRP ribonucleoproteins. RNase P consists of a catalytic RNA moiety and about 10 protein subunits; POP1, POP4, POP5, POP7, RPP14, RPP21, RPP25, RPP30, RPP38 and RPP40. Within the RNase P complex, POP1, POP7 and RPP25 form the 'finger' subcomplex, POP5, RPP14, RPP40 and homodimeric RPP30 form the 'palm' subcomplex, and RPP21, POP4 and RPP38 form the 'wrist' subcomplex. All subunits of the RNase P complex interact with the catalytic RNA. Several subunits of RNase P are also part of the RNase MRP complex. RNase MRP consists of a catalytic RNA moiety and about 8 protein subunits; POP1, POP7, RPP25, RPP30, RPP38, RPP40 and possibly also POP4 and POP5.

It localises to the nucleus. The protein localises to the nucleolus. Component of ribonuclease P, a ribonucleoprotein complex that generates mature tRNA molecules by cleaving their 5'-ends. Also a component of the MRP ribonuclease complex, which cleaves pre-rRNA sequences. The chain is Ribonuclease P protein subunit p38 (Rpp38) from Mus musculus (Mouse).